We begin with the raw amino-acid sequence, 93 residues long: Small ribosomal subunit protein uS19 (93 aa).

2 disordered regions span residues 1–25 (MPRS…QNTK) and 74–93 (FAPT…ARRR). Basic and acidic residues-rich tracts occupy residues 14 to 23 (HLQKKVDDQN) and 81 to 93 (RGHD…ARRR).

It belongs to the universal ribosomal protein uS19 family.

In terms of biological role, protein S19 forms a complex with S13 that binds strongly to the 16S ribosomal RNA. The protein is Small ribosomal subunit protein uS19 of Beutenbergia cavernae (strain ATCC BAA-8 / DSM 12333 / CCUG 43141 / JCM 11478 / NBRC 16432 / NCIMB 13614 / HKI 0122).